The chain runs to 929 residues: Protein transport protein Sec16B (929 aa).

Positions 1-10 (MEPWDPPQLP) are enriched in pro residues. Residues 1–64 (MEPWDPPQLP…RPASQAESYE (64 aa)) form a disordered region. The tract at residues 228–669 (APHKFLQPHV…LRTYCQHCQV (442 aa)) is central conserved domain (CCD); required for localization to endoplasmic reticulum exit sites. Disordered stretches follow at residues 675–727 (PEVA…QDVS) and 781–929 (LSTR…PNPL). Positions 694-710 (EMVHEQPHSDGPHDEQW) are enriched in basic and acidic residues. Residues 781-795 (LSTRARSASESSTAS) are compositionally biased toward low complexity. A compositionally biased stretch (polar residues) spans 838 to 848 (PKATTSGSPTP). Positions 856 to 871 (PSPPGAVPSAQPPASP) are enriched in pro residues.

This sequence belongs to the SEC16 family. SEC16A and SEC16B are each present in multiple copies in a heteromeric complex.

It is found in the endoplasmic reticulum membrane. Its subcellular location is the golgi apparatus membrane. Plays a role in the organization of the endoplasmic reticulum exit sites (ERES), also known as transitional endoplasmic reticulum (tER). Required for secretory cargo traffic from the endoplasmic reticulum to the Golgi apparatus. Involved in peroxisome biogenesis. Regulates the transport of peroxisomal biogenesis factors PEX3 and PEX16 from the ER to peroxisomes. This is Protein transport protein Sec16B (SEC16B) from Gallus gallus (Chicken).